The chain runs to 88 residues: Small ribosomal subunit protein uS15 (88 aa).

A compositionally biased stretch (polar residues) spans 1–20 (MLTTQDKQNIIKENQQSEGD). The interval 1–24 (MLTTQDKQNIIKENQQSEGDTGSP) is disordered.

It belongs to the universal ribosomal protein uS15 family. As to quaternary structure, part of the 30S ribosomal subunit. Forms a bridge to the 50S subunit in the 70S ribosome, contacting the 23S rRNA.

Its function is as follows. One of the primary rRNA binding proteins, it binds directly to 16S rRNA where it helps nucleate assembly of the platform of the 30S subunit by binding and bridging several RNA helices of the 16S rRNA. Forms an intersubunit bridge (bridge B4) with the 23S rRNA of the 50S subunit in the ribosome. This chain is Small ribosomal subunit protein uS15, found in Francisella philomiragia subsp. philomiragia (strain ATCC 25017 / CCUG 19701 / FSC 153 / O#319-036).